Consider the following 163-residue polypeptide: C-type lectin lectoxin-Lio2 (163 aa).

A signal peptide spans 1–21 (MERFIFAALLVVALSLSGTGA). 3 disulfide bridges follow: C25-C36, C53-C152, and C127-C144. The C-type lectin domain maps to 32 to 153 (SDGYCYKVFK…CRSKRYFICK (122 aa)). Residues 117-119 (EPN) carry the Mannose-binding motif. Positions 125 and 141 each coordinate Ca(2+).

This sequence belongs to the true venom lectin family. In terms of tissue distribution, expressed by the venom gland.

The protein resides in the secreted. Its function is as follows. Mannose-binding lectin which recognizes specific carbohydrate structures and agglutinates a variety of animal cells by binding to cell-surface glycoproteins and glycolipids. May be a calcium-dependent lectin. This is C-type lectin lectoxin-Lio2 from Erythrolamprus poecilogyrus (Water snake).